A 205-amino-acid polypeptide reads, in one-letter code: Ras-related protein Rab-1A (205 aa).

Residues 18–26 (GDSGVGKSC), 36–43 (YTESYIST), 66–70 (DTAGQ), 124–127 (NKSD), and 154–156 (SAK) contribute to the GTP site. The short motif at 40-48 (YISTIGVDF) is the Effector region element. Positions 183–198 (SDSKPSVKINSSTPVS) are enriched in polar residues. Residues 183–205 (SDSKPSVKINSSTPVSANKGGCC) are disordered. 2 S-geranylgeranyl cysteine lipidation sites follow: cysteine 204 and cysteine 205.

The protein belongs to the small GTPase superfamily. Rab family.

It is found in the golgi apparatus. The protein localises to the endoplasmic reticulum. Probably required for transit of protein from the ER through Golgi compartment. The chain is Ras-related protein Rab-1A (RAB1A) from Lymnaea stagnalis (Great pond snail).